A 436-amino-acid chain; its full sequence is ATP-sensitive inward rectifier potassium channel 14 (436 aa).

Topologically, residues 1 to 83 (MGLARALRRL…LSDLFTTCVD (83 aa)) are cytoplasmic. Residues 14-43 (LDSGDSRAGDEEEAGPGLCRNGWAPAPVQS) form a disordered region. Residue Cys-81 is modified to S-nitrosocysteine. The helical transmembrane segment at 84-110 (VRWRWMCLLFSCSFLASWLLFGLAFWL) threads the bilayer. Topologically, residues 111–133 (IASLHGDLAAPPPPAPCFSHVAS) are extracellular. Positions 134–150 (FLAAFLFALETQTSIGY) form an intramembrane region, helical; Pore-forming. Residues 147-152 (SIGYGV) carry the Selectivity filter motif. At 151–159 (GVRSVTEEC) the chain is on the extracellular side. Residues 160–187 (PAAVAAVVLQCIAGCVLDAFVVGAVMAK) form a helical membrane-spanning segment. At 188-436 (MAKPKKRNET…TPTLALTLPP (249 aa)) the chain is on the cytoplasmic side. The segment covering 400 to 418 (QEEDEDDETEEGNGVETED) has biased composition (acidic residues). The segment at 400–436 (QEEDEDDETEEGNGVETEDGAASPRVLTPTLALTLPP) is disordered. Residues 426 to 436 (LTPTLALTLPP) show a composition bias toward low complexity.

The protein belongs to the inward rectifier-type potassium channel (TC 1.A.2.1) family. KCNJ14 subfamily. As to expression, expressed preferentially in retina.

Its subcellular location is the membrane. The enzyme catalyses K(+)(in) = K(+)(out). With respect to regulation, channel activity is regulated by variations of cytosolic pH; channels are activated by alkaline and inhibited by acidic pH values. Inhibited by Ba(2+) and Cs(+) in a voltage-dependent manner; sensitivity to those inhibitors is lower than in other Kir channels. Its function is as follows. Inward rectifier potassium channels are characterized by a greater tendency to allow potassium to flow into the cell rather than out of it. Their voltage dependence is regulated by the concentration of extracellular potassium; as external potassium is raised, the voltage range of the channel opening shifts to more positive voltages. The protein is ATP-sensitive inward rectifier potassium channel 14 (KCNJ14) of Homo sapiens (Human).